Reading from the N-terminus, the 127-residue chain is PanD regulatory factor (127 aa).

One can recognise an N-acetyltransferase domain in the interval 1-127 (MKLTIIRLEK…TAQQGGWEKC (127 aa)). Interaction with PanD stretches follow at residues 43 to 48 (RFNERL) and 66 to 76 (LRVREVTRRRG). CoA-binding positions include 66–68 (LRV) and 72–79 (TRRRGVGQ).

It belongs to the PanZ/PanM family. Interacts with PanD in the presence of CoA. Forms a heterooctameric complex composed of four PanD subunits and four PanZ subunits. Monomer in solution.

With respect to regulation, activation of PanD processing occurs even at low CoA concentrations. In contrast, full inhibition of PanD catalytic activity only occurs at sufficiently high CoA concentrations. Controls both the activation and catalytic activity of PanD in a coenzyme A (CoA)-dependent fashion. Binding of CoA or a derivative to PanZ leads to interaction with PanD, which promotes the processing and activation of pro-PanD, and subsequent substrate-mediated inhibition of the active form of PanD. Inhibition of PanD activity is probably the primary metabolic role of PanZ, allowing negative feedback regulation of pantothenate biosynthesis by CoA. In Escherichia coli (strain K12), this protein is PanD regulatory factor.